The sequence spans 573 residues: Proline--tRNA ligase (573 aa).

It belongs to the class-II aminoacyl-tRNA synthetase family. ProS type 1 subfamily. In terms of assembly, homodimer.

The protein resides in the cytoplasm. The enzyme catalyses tRNA(Pro) + L-proline + ATP = L-prolyl-tRNA(Pro) + AMP + diphosphate. Functionally, catalyzes the attachment of proline to tRNA(Pro) in a two-step reaction: proline is first activated by ATP to form Pro-AMP and then transferred to the acceptor end of tRNA(Pro). As ProRS can inadvertently accommodate and process non-cognate amino acids such as alanine and cysteine, to avoid such errors it has two additional distinct editing activities against alanine. One activity is designated as 'pretransfer' editing and involves the tRNA(Pro)-independent hydrolysis of activated Ala-AMP. The other activity is designated 'posttransfer' editing and involves deacylation of mischarged Ala-tRNA(Pro). The misacylated Cys-tRNA(Pro) is not edited by ProRS. The polypeptide is Proline--tRNA ligase (Citrifermentans bemidjiense (strain ATCC BAA-1014 / DSM 16622 / JCM 12645 / Bem) (Geobacter bemidjiensis)).